The following is a 445-amino-acid chain: Tubulin alpha-3 chain (445 aa).

Residues Gln11, Glu72, Ser141, Gly145, Thr146, Thr180, Asn207, and Asn229 each coordinate GTP. Glu72 contacts Mg(2+). Residue Glu255 is part of the active site.

Belongs to the tubulin family. Dimer of alpha and beta chains. A typical microtubule is a hollow water-filled tube with an outer diameter of 25 nm and an inner diameter of 15 nM. Alpha-beta heterodimers associate head-to-tail to form protofilaments running lengthwise along the microtubule wall with the beta-tubulin subunit facing the microtubule plus end conferring a structural polarity. Microtubules usually have 13 protofilaments but different protofilament numbers can be found in some organisms and specialized cells. Interacts with NUM1. Mg(2+) is required as a cofactor.

The protein resides in the cytoplasm. It is found in the cytoskeleton. The enzyme catalyses GTP + H2O = GDP + phosphate + H(+). Its function is as follows. Tubulin is the major constituent of microtubules, a cylinder consisting of laterally associated linear protofilaments composed of alpha- and beta-tubulin heterodimers. Microtubules grow by the addition of GTP-tubulin dimers to the microtubule end, where a stabilizing cap forms. Below the cap, tubulin dimers are in GDP-bound state, owing to GTPase activity of alpha-tubulin. This Saccharomyces cerevisiae (strain ATCC 204508 / S288c) (Baker's yeast) protein is Tubulin alpha-3 chain (TUB3).